A 90-amino-acid polypeptide reads, in one-letter code: Actobindin-B/C (90 aa).

WH2 domains lie at 4-21 (TANPLLAEINKGTDLKHA) and 40-57 (DHSSLLGEVEKGAQLKHV). The segment at 57–90 (VETQDRSAPVTEGATVKSNNHSALLGEIKSKAQE) is disordered.

As to quaternary structure, monomer.

Functionally, is able to bind two actin monomers at high concentrations of G-actin. Inhibits actin polymerization by sequestering G-actin and stabilizing actin dimers. The sequence is that of Actobindin-B/C (abnB) from Dictyostelium discoideum (Social amoeba).